Consider the following 137-residue polypeptide: Large ribosomal subunit protein mL61 (137 aa).

It belongs to the mitochondrion-specific ribosomal protein mL61 family. As to quaternary structure, component of the mitochondrial large ribosomal subunit (mt-LSU). Mature yeast 74S mitochondrial ribosomes consist of a small (37S) and a large (54S) subunit. The 37S small subunit contains a 15S ribosomal RNA (15S mt-rRNA) and 34 different proteins. The 54S large subunit contains a 21S rRNA (21S mt-rRNA) and 46 different proteins.

The protein resides in the mitochondrion. Its function is as follows. Component of the mitochondrial ribosome (mitoribosome), a dedicated translation machinery responsible for the synthesis of mitochondrial genome-encoded proteins, including at least some of the essential transmembrane subunits of the mitochondrial respiratory chain. The mitoribosomes are attached to the mitochondrial inner membrane and translation products are cotranslationally integrated into the membrane. mL61 is not essential in cells grown at 30 degrees Celsius but is required for mitochondrial translation in cells grown at 18 degrees Celsius. The chain is Large ribosomal subunit protein mL61 (MRP49) from Saccharomyces cerevisiae (strain ATCC 204508 / S288c) (Baker's yeast).